Consider the following 319-residue polypeptide: Aspartate carbamoyltransferase catalytic subunit (319 aa).

Arg-55 and Thr-56 together coordinate carbamoyl phosphate. An L-aspartate-binding site is contributed by Lys-83. Carbamoyl phosphate is bound by residues Arg-105, His-144, and Gln-147. Residues Arg-177 and Arg-231 each coordinate L-aspartate. 2 residues coordinate carbamoyl phosphate: Gly-272 and Pro-273.

The protein belongs to the aspartate/ornithine carbamoyltransferase superfamily. ATCase family. As to quaternary structure, heterododecamer (2C3:3R2) of six catalytic PyrB chains organized as two trimers (C3), and six regulatory PyrI chains organized as three dimers (R2).

The catalysed reaction is carbamoyl phosphate + L-aspartate = N-carbamoyl-L-aspartate + phosphate + H(+). The protein operates within pyrimidine metabolism; UMP biosynthesis via de novo pathway; (S)-dihydroorotate from bicarbonate: step 2/3. Its function is as follows. Catalyzes the condensation of carbamoyl phosphate and aspartate to form carbamoyl aspartate and inorganic phosphate, the committed step in the de novo pyrimidine nucleotide biosynthesis pathway. The polypeptide is Aspartate carbamoyltransferase catalytic subunit (Nocardia farcinica (strain IFM 10152)).